A 225-amino-acid chain; its full sequence is MTVMAPVVTVDGPSGAGKGTLCKALAEALQWNLLDSGAIYRVLALAALHHHVDISSEDALVPLASHLDVRFVAEGGQLKVILEGEDVSHEIRTEAVGNTASQAAAFPRVREALLRRQRAFREAPGLIADGRDMGTVVFPDAPVKIFLDASAEERAQRRMLQLQGKGFNVNFERLLSEIKERDERDRNRPVAPLVPAADALVLDSTEMTIDEVIARALAYAREILA.

Residue 12 to 20 participates in ATP binding; that stretch reads GPSGAGKGT.

This sequence belongs to the cytidylate kinase family. Type 1 subfamily.

Its subcellular location is the cytoplasm. It carries out the reaction CMP + ATP = CDP + ADP. The catalysed reaction is dCMP + ATP = dCDP + ADP. This chain is Cytidylate kinase, found in Pectobacterium carotovorum subsp. carotovorum (strain PC1).